Reading from the N-terminus, the 576-residue chain is Zinc finger protein 791 (576 aa).

Positions 4–90 (VAFEDVSVSF…AENFSPNLSV (87 aa)) constitute a KRAB domain. 17 consecutive C2H2-type zinc fingers follow at residues 100-122 (YECT…MRSH), 132-154 (YKCK…ERSH), 160-182 (YKCK…ERTH), 188-210 (YECK…ERIH), 216-238 (YECK…ERTH), 244-266 (YACK…MITH), 272-294 (YKCK…ERIH), 300-322 (YKCK…ERIH), 328-350 (YKCK…VRVH), 356-378 (YKCK…ERTH), 384-406 (YECK…KRNH), 412-434 (YECK…MITH), 440-462 (YKCR…ERTH), 468-490 (YECK…KRTH), 496-518 (YECK…MRMH), 524-546 (YKCK…TRIH), and 552-574 (LECK…MRMH).

This sequence belongs to the krueppel C2H2-type zinc-finger protein family.

It localises to the nucleus. In terms of biological role, may be involved in transcriptional regulation. This chain is Zinc finger protein 791 (ZNF791), found in Homo sapiens (Human).